The following is a 133-amino-acid chain: Ribosome-binding factor A (133 aa).

This sequence belongs to the RbfA family. In terms of assembly, monomer. Binds 30S ribosomal subunits, but not 50S ribosomal subunits or 70S ribosomes.

Its subcellular location is the cytoplasm. Its function is as follows. One of several proteins that assist in the late maturation steps of the functional core of the 30S ribosomal subunit. Associates with free 30S ribosomal subunits (but not with 30S subunits that are part of 70S ribosomes or polysomes). Required for efficient processing of 16S rRNA. May interact with the 5'-terminal helix region of 16S rRNA. The protein is Ribosome-binding factor A of Citrobacter koseri (strain ATCC BAA-895 / CDC 4225-83 / SGSC4696).